A 199-amino-acid chain; its full sequence is GTP cyclohydrolase-2 (199 aa).

50-54 serves as a coordination point for GTP; it reads RIHSE. Positions 55, 66, and 68 each coordinate Zn(2+). GTP is bound by residues Q71, 93–95, and T115; that span reads EGR. D127 serves as the catalytic Proton acceptor. The active-site Nucleophile is the R129. Residues T150 and K155 each contribute to the GTP site.

It belongs to the GTP cyclohydrolase II family. In terms of assembly, homodimer. Requires Zn(2+) as cofactor.

The enzyme catalyses GTP + 4 H2O = 2,5-diamino-6-hydroxy-4-(5-phosphoribosylamino)-pyrimidine + formate + 2 phosphate + 3 H(+). The protein operates within cofactor biosynthesis; riboflavin biosynthesis; 5-amino-6-(D-ribitylamino)uracil from GTP: step 1/4. Its function is as follows. Catalyzes the conversion of GTP to 2,5-diamino-6-ribosylamino-4(3H)-pyrimidinone 5'-phosphate (DARP), formate and pyrophosphate. The chain is GTP cyclohydrolase-2 from Buchnera aphidicola subsp. Baizongia pistaciae (strain Bp).